The chain runs to 63 residues: Large ribosomal subunit protein uL29 (63 aa).

The protein belongs to the universal ribosomal protein uL29 family.

This Chromohalobacter salexigens (strain ATCC BAA-138 / DSM 3043 / CIP 106854 / NCIMB 13768 / 1H11) protein is Large ribosomal subunit protein uL29.